The sequence spans 348 residues: dTDP-glucose 4,6-dehydratase (348 aa).

NAD(+) is bound by residues F15–I16, D37–T40, D62–I63, and Y82–S86. Substrate is bound by residues S86 and N88. T101 is an NAD(+) binding site. T125 is a substrate binding site. D126 serves as the catalytic Proton donor. Residues E127 and Y161 each act as proton acceptor in the active site. NAD(+) is bound at residue Y161–K165. N190 serves as a coordination point for substrate. Position 191 (N191) interacts with NAD(+). Residues K200–Q205, K216–Y218, R225, N260, and D283–H287 contribute to the substrate site.

This sequence belongs to the NAD(P)-dependent epimerase/dehydratase family. dTDP-glucose dehydratase subfamily. As to quaternary structure, homodimer. The cofactor is NAD(+).

The catalysed reaction is dTDP-alpha-D-glucose = dTDP-4-dehydro-6-deoxy-alpha-D-glucose + H2O. The protein operates within carbohydrate biosynthesis; dTDP-L-rhamnose biosynthesis. In terms of biological role, catalyzes the dehydration of dTDP-D-glucose to form dTDP-6-deoxy-D-xylo-4-hexulose via a three-step process involving oxidation, dehydration and reduction. In Streptococcus mutans serotype c (strain ATCC 700610 / UA159), this protein is dTDP-glucose 4,6-dehydratase (rmlB).